The primary structure comprises 380 residues: Anhydro-N-acetylmuramic acid kinase (380 aa).

ATP is bound at residue 9–16 (GTSVDGID).

The protein belongs to the anhydro-N-acetylmuramic acid kinase family.

It catalyses the reaction 1,6-anhydro-N-acetyl-beta-muramate + ATP + H2O = N-acetyl-D-muramate 6-phosphate + ADP + H(+). The protein operates within amino-sugar metabolism; 1,6-anhydro-N-acetylmuramate degradation. It participates in cell wall biogenesis; peptidoglycan recycling. Its function is as follows. Catalyzes the specific phosphorylation of 1,6-anhydro-N-acetylmuramic acid (anhMurNAc) with the simultaneous cleavage of the 1,6-anhydro ring, generating MurNAc-6-P. Is required for the utilization of anhMurNAc either imported from the medium or derived from its own cell wall murein, and thus plays a role in cell wall recycling. This Cyanothece sp. (strain PCC 7425 / ATCC 29141) protein is Anhydro-N-acetylmuramic acid kinase.